The chain runs to 652 residues: Acetyl-coenzyme A synthetase (652 aa).

Residues 191–194, Thr311, and Asn335 contribute to the CoA site; that span reads RAGR. ATP contacts are provided by residues 387–389, 411–416, Asp500, and Arg515; these read GEP and DTWWQT. Ser523 lines the CoA pocket. Arg526 serves as a coordination point for ATP. Mg(2+) is bound by residues Val537, His539, and Ile542. Arg584 contributes to the CoA binding site. An N6-acetyllysine modification is found at Lys609.

The protein belongs to the ATP-dependent AMP-binding enzyme family. Mg(2+) is required as a cofactor. Post-translationally, acetylated. Deacetylation by the SIR2-homolog deacetylase activates the enzyme.

It catalyses the reaction acetate + ATP + CoA = acetyl-CoA + AMP + diphosphate. Functionally, catalyzes the conversion of acetate into acetyl-CoA (AcCoA), an essential intermediate at the junction of anabolic and catabolic pathways. Acs undergoes a two-step reaction. In the first half reaction, Acs combines acetate with ATP to form acetyl-adenylate (AcAMP) intermediate. In the second half reaction, it can then transfer the acetyl group from AcAMP to the sulfhydryl group of CoA, forming the product AcCoA. Enables the cell to use acetate during aerobic growth to generate energy via the TCA cycle, and biosynthetic compounds via the glyoxylate shunt. Acetylates CheY, the response regulator involved in flagellar movement and chemotaxis. This chain is Acetyl-coenzyme A synthetase, found in Serratia proteamaculans (strain 568).